We begin with the raw amino-acid sequence, 916 residues long: Bifunctional aspartokinase/homoserine dehydrogenase 2, chloroplastic (916 aa).

The N-terminal 87 residues, 1–87 (MATLKPSFTV…VDQVQIPKGE (87 aa)), are a transit peptide targeting the chloroplast. The segment at 88-336 (MWSVHKFGGT…VNEAVILQTL (249 aa)) is aspartokinase. The tract at residues 337–562 (SYQEAWEMSY…LSRTTLAMGI (226 aa)) is interface. ACT domains follow at residues 412 to 487 (VEGT…VIPN) and 493 to 570 (AVGQ…LIGA). A homoserine dehydrogenase region spans residues 563–916 (VGPGLIGATL…RLASYLGAPS (354 aa)). Isoleucine 568 is a binding site for NAD(+). NADP(+) is bound by residues isoleucine 568, lysine 600, threonine 649, and lysine 673. Residue isoleucine 568 coordinates NADPH. Threonine 649 provides a ligand contact to NAD(+). Residues threonine 649 and lysine 673 each coordinate NADPH. Residues glutamate 700, valine 703, alanine 705, and leucine 707 each coordinate Na(+). NADP(+)-binding residues include glycine 758 and glutamate 761. L-homoserine contacts are provided by glutamate 761 and aspartate 772. Catalysis depends on lysine 776, which acts as the Proton donor. Glycine 893 provides a ligand contact to NAD(+). Residue glycine 893 coordinates NADP(+). Glycine 893 contributes to the NADPH binding site.

In the N-terminal section; belongs to the aspartokinase family. It in the C-terminal section; belongs to the homoserine dehydrogenase family. As to quaternary structure, homo- or heterodimer. A metal cation is required as a cofactor.

It is found in the plastid. The protein localises to the chloroplast. It carries out the reaction L-homoserine + NADP(+) = L-aspartate 4-semialdehyde + NADPH + H(+). The enzyme catalyses L-homoserine + NAD(+) = L-aspartate 4-semialdehyde + NADH + H(+). It catalyses the reaction L-aspartate + ATP = 4-phospho-L-aspartate + ADP. It participates in amino-acid biosynthesis; L-lysine biosynthesis via DAP pathway; (S)-tetrahydrodipicolinate from L-aspartate: step 1/4. It functions in the pathway amino-acid biosynthesis; L-methionine biosynthesis via de novo pathway; L-homoserine from L-aspartate: step 1/3. Its pathway is amino-acid biosynthesis; L-methionine biosynthesis via de novo pathway; L-homoserine from L-aspartate: step 3/3. The protein operates within amino-acid biosynthesis; L-threonine biosynthesis; L-threonine from L-aspartate: step 1/5. It participates in amino-acid biosynthesis; L-threonine biosynthesis; L-threonine from L-aspartate: step 3/5. Its activity is regulated as follows. Threonine interaction with Gln-443 leads to inhibition of aspartate kinase activity and facilitates the binding of a second threonine on Gln-524, leading to a partial inhibition of homoserine dehydrogenase activity (25% of activity remaining at saturation with threonine). Homoserine dehydrogenase activity is also partially inhibited by cysteine (15% of activity remaining at saturation with cysteine). No synergy between threonine and cysteine for the inhibition. 13-fold activation of aspartate kinase activity by cysteine, isoleucine, valine, serine and alanine at 2.5 mM and 4-fold activation by leucine at 2.5 mM, but no activation of homoserine dehydrogenase activity. Its function is as follows. Bifunctional aspartate kinase and homoserine dehydrogenase that catalyzes the first and the third steps toward the synthesis of lysine, methionine and threonine from aspartate. In Arabidopsis thaliana (Mouse-ear cress), this protein is Bifunctional aspartokinase/homoserine dehydrogenase 2, chloroplastic (AKHSDH2).